We begin with the raw amino-acid sequence, 361 residues long: Tetraacyldisaccharide 4'-kinase (361 aa).

68 to 75 provides a ligand contact to ATP; that stretch reads TVGGTGKT.

The protein belongs to the LpxK family.

The enzyme catalyses a lipid A disaccharide + ATP = a lipid IVA + ADP + H(+). Its pathway is glycolipid biosynthesis; lipid IV(A) biosynthesis; lipid IV(A) from (3R)-3-hydroxytetradecanoyl-[acyl-carrier-protein] and UDP-N-acetyl-alpha-D-glucosamine: step 6/6. In terms of biological role, transfers the gamma-phosphate of ATP to the 4'-position of a tetraacyldisaccharide 1-phosphate intermediate (termed DS-1-P) to form tetraacyldisaccharide 1,4'-bis-phosphate (lipid IVA). This Pelobacter propionicus (strain DSM 2379 / NBRC 103807 / OttBd1) protein is Tetraacyldisaccharide 4'-kinase.